Reading from the N-terminus, the 190-residue chain is Protein GrpE (190 aa).

The disordered stretch occupies residues 1 to 41 (MAKEKQEEQQKQTAPENEKAPKKDIKKEASDKKGDQTSKLK).

The protein belongs to the GrpE family. Homodimer.

Its subcellular location is the cytoplasm. Participates actively in the response to hyperosmotic and heat shock by preventing the aggregation of stress-denatured proteins, in association with DnaK and GrpE. It is the nucleotide exchange factor for DnaK and may function as a thermosensor. Unfolded proteins bind initially to DnaJ; upon interaction with the DnaJ-bound protein, DnaK hydrolyzes its bound ATP, resulting in the formation of a stable complex. GrpE releases ADP from DnaK; ATP binding to DnaK triggers the release of the substrate protein, thus completing the reaction cycle. Several rounds of ATP-dependent interactions between DnaJ, DnaK and GrpE are required for fully efficient folding. This chain is Protein GrpE, found in Limosilactobacillus reuteri (strain DSM 20016) (Lactobacillus reuteri).